We begin with the raw amino-acid sequence, 111 residues long: Cytochrome c6-like (111 aa).

An N-terminal signal peptide occupies residues 1–25 (MQKFLKLVLVTFLFLISTLTPPANA). Heme c contacts are provided by cysteine 39, cysteine 42, histidine 43, and methionine 83.

Belongs to the cytochrome c family. PetJ subfamily. In terms of processing, binds 1 heme c group covalently per subunit.

The protein resides in the cellular thylakoid lumen. The polypeptide is Cytochrome c6-like (Nostoc sp. (strain PCC 7120 / SAG 25.82 / UTEX 2576)).